We begin with the raw amino-acid sequence, 554 residues long: NADH-ubiquinone oxidoreductase chain 5 (554 aa).

Helical transmembrane passes span 6–26 (VCGI…LYLL), 57–77 (LMFI…SISY), 93–113 (ILFL…SIIL), 150–170 (IGLL…LSFY), 175–197 (FMMI…STWL), 209–228 (SLVH…IRYV), 238–258 (YIML…NFEL), 263–283 (VVAY…SIGS), 286–306 (LVFL…MCVG), 332–352 (SMIL…VGYY), 379–399 (IFTV…FLMM), 409–429 (IMCI…KLIF), 441–461 (LLMI…IMGF), 480–500 (FLFM…MMFT), and 532–552 (LMIN…IYLI).

Belongs to the complex I subunit 5 family.

The protein localises to the mitochondrion inner membrane. It carries out the reaction a ubiquinone + NADH + 5 H(+)(in) = a ubiquinol + NAD(+) + 4 H(+)(out). Functionally, core subunit of the mitochondrial membrane respiratory chain NADH dehydrogenase (Complex I) that is believed to belong to the minimal assembly required for catalysis. Complex I functions in the transfer of electrons from NADH to the respiratory chain. The immediate electron acceptor for the enzyme is believed to be ubiquinone. In Apis mellifera ligustica (Common honeybee), this protein is NADH-ubiquinone oxidoreductase chain 5 (ND5).